A 248-amino-acid chain; its full sequence is Aspartate/glutamate leucyltransferase (248 aa).

This sequence belongs to the R-transferase family. Bpt subfamily.

The protein resides in the cytoplasm. The enzyme catalyses N-terminal L-glutamyl-[protein] + L-leucyl-tRNA(Leu) = N-terminal L-leucyl-L-glutamyl-[protein] + tRNA(Leu) + H(+). The catalysed reaction is N-terminal L-aspartyl-[protein] + L-leucyl-tRNA(Leu) = N-terminal L-leucyl-L-aspartyl-[protein] + tRNA(Leu) + H(+). Functions in the N-end rule pathway of protein degradation where it conjugates Leu from its aminoacyl-tRNA to the N-termini of proteins containing an N-terminal aspartate or glutamate. The polypeptide is Aspartate/glutamate leucyltransferase (Methylorubrum extorquens (strain PA1) (Methylobacterium extorquens)).